The primary structure comprises 374 residues: MSEGVYEKFLAPEEPFPLLSQRGNFSEDATLDVSDFGCQLSSCHRTDPLHRFHSSRWNLTSCGTSVASSECSEELFSSVSVGDQDDCYSLLDDQELTSFDLFPEGSVCSDVSSSISTYWDWSDSEFEWQLPGSDIASGSDVLSDIIPSVPSSPCLVSKRKSKPHRNLDELPWSAMTNDEQVEYIEYLSRKVSTEMGLREQLDIIKIIDPSAQILPTDSEFIIELNCLTDEKLKQVRSYIREHSPRQRPNITRDNWKRSMASNGSTSGVSAHSSSNASMVSSTSSSTASTGSNSSTNISRAHSDGNLATAAERIRDSKKRSKQRKMQQKALRKRQLKEQRQARKERLSGLFMNEEVLSLKVTEEEDHCDDVDVLM.

The interval 238 to 343 (YIREHSPRQR…QLKEQRQARK (106 aa)) is disordered. A compositionally biased stretch (low complexity) spans 261 to 295 (SNGSTSGVSAHSSSNASMVSSTSSSTASTGSNSST). Over residues 315 to 334 (DSKKRSKQRKMQQKALRKRQ) the composition is skewed to basic residues. Residues 317-346 (KKRSKQRKMQQKALRKRQLKEQRQARKERL) adopt a coiled-coil conformation.

Belongs to the FAM199 family.

The sequence is that of Protein FAM199X (fam199x) from Danio rerio (Zebrafish).